The chain runs to 266 residues: Ras-like protein family member 12 (266 aa).

GTP contacts are provided by residues glycine 27–serine 34, aspartate 74–leucine 78, and asparagine 134–aspartate 137.

The protein belongs to the small GTPase superfamily. Ras family.

It catalyses the reaction GTP + H2O = GDP + phosphate + H(+). This is Ras-like protein family member 12 (RASL12) from Bos taurus (Bovine).